The chain runs to 409 residues: Beta-glucanase (409 aa).

Residues 1–31 (MRKNRGFSFSSKAVMMCCLAFLLIPASFAFA) form the signal peptide. Catalysis depends on glutamate 95, which acts as the Proton donor. Aspartate 156 (nucleophile) is an active-site residue.

It belongs to the glycosyl hydrolase 8 (cellulase D) family.

The catalysed reaction is Hydrolysis of (1-&gt;4)-beta-D-glucosidic linkages in beta-D-glucans containing (1-&gt;3)- and (1-&gt;4)-bonds.. The chain is Beta-glucanase (bgc) from Niallia circulans (Bacillus circulans).